The primary structure comprises 322 residues: Ribosomal RNA large subunit methyltransferase F (322 aa).

This sequence belongs to the methyltransferase superfamily. METTL16/RlmF family.

The protein localises to the cytoplasm. It catalyses the reaction adenosine(1618) in 23S rRNA + S-adenosyl-L-methionine = N(6)-methyladenosine(1618) in 23S rRNA + S-adenosyl-L-homocysteine + H(+). Specifically methylates the adenine in position 1618 of 23S rRNA. This Cytophaga hutchinsonii (strain ATCC 33406 / DSM 1761 / CIP 103989 / NBRC 15051 / NCIMB 9469 / D465) protein is Ribosomal RNA large subunit methyltransferase F.